Consider the following 327-residue polypeptide: Ribosomal RNA small subunit methyltransferase H (327 aa).

Residues 37–39, Asp-55, Phe-82, Asp-99, and Gln-106 contribute to the S-adenosyl-L-methionine site; that span reads GGY. The tract at residues 303 to 327 is disordered; the sequence is IATRTDAPAQPVAPETLGLPQLEGF.

It belongs to the methyltransferase superfamily. RsmH family.

Its subcellular location is the cytoplasm. The enzyme catalyses cytidine(1402) in 16S rRNA + S-adenosyl-L-methionine = N(4)-methylcytidine(1402) in 16S rRNA + S-adenosyl-L-homocysteine + H(+). Functionally, specifically methylates the N4 position of cytidine in position 1402 (C1402) of 16S rRNA. The polypeptide is Ribosomal RNA small subunit methyltransferase H (Jannaschia sp. (strain CCS1)).